A 1004-amino-acid polypeptide reads, in one-letter code: Glycine dehydrogenase (decarboxylating), mitochondrial (1004 aa).

N6-(pyridoxal phosphate)lysine is present on Lys-738.

This sequence belongs to the GcvP family. As to quaternary structure, homodimer. Interacts with GCSH. The glycine cleavage system is composed of four proteins: P (GLDC), T (GCST), L (DLD) and H (GCSH). Pyridoxal 5'-phosphate is required as a cofactor. As to expression, liver (at protein level).

It localises to the mitochondrion. The catalysed reaction is N(6)-[(R)-lipoyl]-L-lysyl-[glycine-cleavage complex H protein] + glycine + H(+) = N(6)-[(R)-S(8)-aminomethyldihydrolipoyl]-L-lysyl-[glycine-cleavage complex H protein] + CO2. Its activity is regulated as follows. Stimulated by lipoic acid. Inhibited in presence of methylamine. In terms of biological role, the glycine cleavage system catalyzes the degradation of glycine. The P protein (GLDC) binds the alpha-amino group of glycine through its pyridoxal phosphate cofactor; CO(2) is released and the remaining methylamine moiety is then transferred to the lipoamide cofactor of the H protein (GCSH). The sequence is that of Glycine dehydrogenase (decarboxylating), mitochondrial from Gallus gallus (Chicken).